The following is a 1793-amino-acid chain: Brefeldin A-inhibited guanine nucleotide-exchange protein 2 (1793 aa).

Position 2 is an N-acetylalanine (Ala-2). 3 disordered regions span residues 45-71 (NSLQ…PGPL), 266-299 (TMSG…LLDS), and 579-606 (GSPQ…GGTS). Over residues 55–66 (SSAATDSESESS) the composition is skewed to low complexity. The span at 270 to 281 (SGSGSGSGGQDG) shows a compositional bias: gly residues. 2 stretches are compositionally biased toward polar residues: residues 284 to 294 (GTTTVETTNPT) and 594 to 605 (GSDTYSESSGGT). Ser-595 carries the post-translational modification Phosphoserine. One can recognise an SEC7 domain in the interval 610–797 (AIEQRRAYKL…RSLYERITKH (188 aa)). Glu-712 is an active-site residue. Over residues 1311 to 1327 (NKYKGTSGKIPQSSLHS) the composition is skewed to polar residues. Residues 1311–1333 (NKYKGTSGKIPQSSLHSGKSGKQ) are disordered.

As to quaternary structure, homodimer.

It is found in the cytoplasm. The protein resides in the cytosol. It localises to the membrane. With respect to regulation, inhibited by brefeldin A. In terms of biological role, activates the ARF proteins by exchanging bound GDP for free GTP. Plays a role in vesicular protein sorting. The sequence is that of Brefeldin A-inhibited guanine nucleotide-exchange protein 2 (BIG2) from Arabidopsis thaliana (Mouse-ear cress).